A 56-amino-acid chain; its full sequence is Per os infectivity factor AC110 (56 aa).

Its function is as follows. Plays an essential role in the process of oral infection. May participate in the crossing of occlusion-derived virions through the host peritrophic membrane during oral infection. In Autographa californica nuclear polyhedrosis virus (AcMNPV), this protein is Per os infectivity factor AC110.